We begin with the raw amino-acid sequence, 190 residues long: Potassium-transporting ATPase KdpC subunit (190 aa).

Residues 13–33 traverse the membrane as a helical segment; it reads VGFLLLTLVCGVVYPGIVTII.

This sequence belongs to the KdpC family. In terms of assembly, the system is composed of three essential subunits: KdpA, KdpB and KdpC.

The protein localises to the cell membrane. Part of the high-affinity ATP-driven potassium transport (or Kdp) system, which catalyzes the hydrolysis of ATP coupled with the electrogenic transport of potassium into the cytoplasm. This subunit acts as a catalytic chaperone that increases the ATP-binding affinity of the ATP-hydrolyzing subunit KdpB by the formation of a transient KdpB/KdpC/ATP ternary complex. The sequence is that of Potassium-transporting ATPase KdpC subunit from Listeria welshimeri serovar 6b (strain ATCC 35897 / DSM 20650 / CCUG 15529 / CIP 8149 / NCTC 11857 / SLCC 5334 / V8).